Reading from the N-terminus, the 40-residue chain is CKGQSCSSCSTKEFCLSKGSRLMYDCCTGSCCGVKTAGVT.

Contains 4 disulfide bonds. In terms of tissue distribution, expressed by the venom duct.

The protein localises to the secreted. Functionally, omega-conotoxins act at presynaptic membranes, they bind and block voltage-gated calcium channels (Cav). This toxin inhibits rat Cav2.2/CACNA1B calcium channels in a dose-dependent manner (EC(50)=2.8 uM), whose effect is partially reversed after washing. In vivo, when injected into mice, it shows both an analgesic effect in acute thermal pain at 30 and 45 minutes post-injection and an anti-nociceptive effect in a formalin chronic pain test. The protein is Omega-conotoxin RsXXVIA of Conus regularis (Regular cone).